Here is a 214-residue protein sequence, read N- to C-terminus: Homologous-pairing protein 2 homolog (214 aa).

Positions 79–147 form a coiled coil; the sequence is SDSELKDLDA…EHKLTNIKSA (69 aa). The tract at residues 115 to 179 is DNA-binding; it reads TSSLTTEEML…WKKRKRMATD (65 aa).

This sequence belongs to the HOP2 family.

The protein localises to the nucleus. Its function is as follows. Plays an important role in meiotic recombination. Stimulates DMC1-mediated strand exchange required for pairing of homologous chromosomes during meiosis. This chain is Homologous-pairing protein 2 homolog (psmc3ip), found in Xenopus laevis (African clawed frog).